Reading from the N-terminus, the 196-residue chain is RNA-free ribonuclease P (196 aa).

Belongs to the HARP family.

The enzyme catalyses Endonucleolytic cleavage of RNA, removing 5'-extranucleotides from tRNA precursor.. RNA-free RNase P that catalyzes the removal of the 5'-leader sequence from pre-tRNA to produce the mature 5'-terminus. This Thermodesulfovibrio yellowstonii (strain ATCC 51303 / DSM 11347 / YP87) protein is RNA-free ribonuclease P.